Consider the following 577-residue polypeptide: Protein GPR108 (577 aa).

A signal peptide spans 1-34; the sequence is MAVSERRGLSGESPAQCRWEYLSLLVLMLSGCSG. N-linked (GlcNAc...) asparagine glycosylation is found at asparagine 59 and asparagine 111. Residues 144-224 form a disordered region; that stretch reads LLPEAPSQSG…TRGPSGKEKD (81 aa). N-linked (GlcNAc...) asparagine glycans are attached at residues asparagine 233 and asparagine 237. 7 consecutive transmembrane segments (helical) span residues 296 to 316, 325 to 345, 369 to 389, 400 to 420, 434 to 454, 482 to 502, and 506 to 526; these read LYLI…SVLC, IHWL…FHSI, LLKG…WAFV, IFGI…VIES, ILFL…VWSI, VMVI…RVAV, and WQWL…VLTG.

It belongs to the LU7TM family.

It is found in the golgi apparatus. Its subcellular location is the cis-Golgi network membrane. It localises to the trans-Golgi network membrane. The protein localises to the golgi apparatus membrane. Its function is as follows. May play a role in intracellular immune modulation by activating NF-kappaB response and attenuating Toll-like-receptor response. The polypeptide is Protein GPR108 (Gpr108) (Rattus norvegicus (Rat)).